A 95-amino-acid polypeptide reads, in one-letter code: Toxin HigB-1 (95 aa).

Toxic component of a type II toxin-antitoxin (TA) system. Inhibits translation by cleavage of mRNA. This Vibrio cholerae serotype O1 (strain ATCC 39315 / El Tor Inaba N16961) protein is Toxin HigB-1 (higB-1).